The following is a 232-amino-acid chain: Cobalt transport protein CbiM (232 aa).

6 helical membrane passes run 6 to 26, 43 to 63, 84 to 104, 107 to 127, 135 to 155, and 181 to 201; these read GFLP…FVVH, LLLG…LPSV, IMAV…AHGG, TLGA…YGVY, VPLM…TYCV, and IFAV…VIVM.

It belongs to the CbiM family. As to quaternary structure, forms an energy-coupling factor (ECF) transporter complex composed of an ATP-binding protein (A component, CbiO), a transmembrane protein (T component, CbiQ) and 2 possible substrate-capture proteins (S components, CbiM and CbiN) of unknown stoichimetry.

Its subcellular location is the cell membrane. The protein operates within cofactor biosynthesis; adenosylcobalamin biosynthesis. Part of the energy-coupling factor (ECF) transporter complex CbiMNOQ involved in cobalt import. The chain is Cobalt transport protein CbiM from Streptomyces coelicolor (strain ATCC BAA-471 / A3(2) / M145).